The chain runs to 204 residues: HTH-type transcriptional repressor KstR2 (204 aa).

The 61-residue stretch at 13-73 (SGRRTELLDI…EILRGFLDDL (61 aa)) folds into the HTH tetR-type domain. Positions 36 to 55 (TVRDIADAAGILSGSLYHHF) form a DNA-binding region, H-T-H motif.

Homodimer.

Functionally, controls the expression of a small regulon that may play a role in the utilization of cholesterol. The sequence is that of HTH-type transcriptional repressor KstR2 (kstR2) from Rhodococcus jostii (strain RHA1).